A 355-amino-acid polypeptide reads, in one-letter code: Protein RecA (355 aa).

Gly-65–Thr-72 lines the ATP pocket.

Belongs to the RecA family.

The protein localises to the cytoplasm. Can catalyze the hydrolysis of ATP in the presence of single-stranded DNA, the ATP-dependent uptake of single-stranded DNA by duplex DNA, and the ATP-dependent hybridization of homologous single-stranded DNAs. It interacts with LexA causing its activation and leading to its autocatalytic cleavage. The chain is Protein RecA from Pseudomonas putida (strain ATCC 47054 / DSM 6125 / CFBP 8728 / NCIMB 11950 / KT2440).